The following is a 472-amino-acid chain: Argininosuccinate lyase (472 aa).

Belongs to the lyase 1 family. Argininosuccinate lyase subfamily.

Its subcellular location is the cytoplasm. It carries out the reaction 2-(N(omega)-L-arginino)succinate = fumarate + L-arginine. The protein operates within amino-acid biosynthesis; L-arginine biosynthesis; L-arginine from L-ornithine and carbamoyl phosphate: step 3/3. In Synechococcus sp. (strain CC9605), this protein is Argininosuccinate lyase.